Here is a 318-residue protein sequence, read N- to C-terminus: Forkhead box protein I2 (318 aa).

Positions 1-30 (MATYCDDLGPSSAPPGQAQATAHPPGYEPG) are disordered. Residues 102 to 196 (RPPYSYSALI…DNGNFRRKRK (95 aa)) constitute a DNA-binding region (fork-head).

Its subcellular location is the nucleus. In terms of biological role, possible transcriptional activator. The sequence is that of Forkhead box protein I2 (FOXI2) from Homo sapiens (Human).